The primary structure comprises 596 residues: MSPEALSELIFNIANTLVSEGKAGTLTADLIPPQAKFAVMRPKDRAHGDWASNAAMQLAKKAGMKPRDLAELFAAELTNADGIKSVEVAGPGFINITLDSASAAAVVDTVLEAGSDYGKNDHLSGKTLNLEFVSANPTGPIHIGGTRWAAVGDSMARVLEANGAKVVREYYFNDHGEQINRFAKSLVAAAHGEETPIDGYKGAYIDEIAKRVIDEANADGVDVLSLPRVDGGADQDGNPLGEGDSEQREEFRKRAVPMMFDEIQRSMKNFRVNFDVWFHENSLYSDGEVDQAIADLRARGDIFEKDGATWFESTKHGDDKDRVIIKSDGNYAYFAADIAYYRNKRHRETNPADVAIYMLGADHHGYIGRMMAMCEAFGDKPGENMQILIGQLVNVMKDGKAVRMSKRAGNVVTIDDLTDAIGVDASRYSLARTDYNSPVDIDLNLLSSHSNENPVYYVQYAHARSCNVDRNAAAAGITYEGADVSLLDTTADGEVLAALAQWPALLREAGDLRAPHRVAHYLEDLAATYHKWYNVERVVPMELTDPEARGEQADAIRIAKAPEPARAAARLKLNDAVKTVIAEGLDLLGVTAPDKM.

The 'HIGH' region signature appears at 135–145; it reads ANPTGPIHIGG. The segment at 227 to 249 is disordered; it reads PRVDGGADQDGNPLGEGDSEQRE.

The protein belongs to the class-I aminoacyl-tRNA synthetase family. In terms of assembly, monomer.

The protein localises to the cytoplasm. The catalysed reaction is tRNA(Arg) + L-arginine + ATP = L-arginyl-tRNA(Arg) + AMP + diphosphate. The polypeptide is Arginine--tRNA ligase (Bifidobacterium adolescentis (strain ATCC 15703 / DSM 20083 / NCTC 11814 / E194a)).